An 88-amino-acid chain; its full sequence is Small ribosomal subunit protein uS17 (88 aa).

Belongs to the universal ribosomal protein uS17 family. In terms of assembly, part of the 30S ribosomal subunit.

Its function is as follows. One of the primary rRNA binding proteins, it binds specifically to the 5'-end of 16S ribosomal RNA. This is Small ribosomal subunit protein uS17 from Methylorubrum extorquens (strain PA1) (Methylobacterium extorquens).